Here is a 219-residue protein sequence, read N- to C-terminus: Transmembrane emp24 domain-containing protein 10 (219 aa).

An N-terminal signal peptide occupies residues methionine 1–alanine 31. The required for interaction with STX17 stretch occupies residues methionine 1–glutamate 142. Residues isoleucine 32–arginine 185 lie on the Lumenal side of the membrane. One can recognise a GOLD domain in the interval arginine 41–serine 193. The interval leucine 147 to threonine 178 is required for TMED10 and TMED2 cis-Golgi network localization. Arginine 171 and arginine 176 each carry dimethylated arginine. Residue asparagine 179 is glycosylated (N-linked (GlcNAc...) asparagine). Residues valine 186–phenylalanine 206 traverse the membrane as a helical segment. The tract at residues glutamine 204–glutamate 219 is interaction with COPG1. Residues tyrosine 207 to glutamate 219 are Cytoplasmic-facing. Positions tyrosine 207 to glutamate 219 are interaction with ARF1 and IL1B. Positions phenylalanine 211 to phenylalanine 212 match the COPII vesicle coat-binding motif. A COPI vesicle coat-binding motif is present at residues phenylalanine 211–glutamate 219.

This sequence belongs to the EMP24/GP25L family. Predominantly dimeric and to a lesser extent monomeric in the ER. Monomer and dimer in ERGIC and cis-Golgi network. Forms homooligomer (via GOLD domain); the assembly is promoted by direct binding with leaderless cargos and may form a protein channel that facilitates cargo entry into the ERGIC. Forms heterooligomeric complexes with other members of the p24 family such as TMED2, TMED7 and TMED9. Interacts (via GOLD domain) with TMED2 (via GOLD domain); the complex is required for export of TMED10 from the ER to the cis-Golgi network; the complex is proposed to be involved in cis-Golgi network dynamics and / or biogenesis. Associates with the COPI vesicle coat subunits (coatomer). Tetramerization of the cytoplasmic domain at the Golgi membrane in vitro; the complex is proposed to interact with COPI coatomer and induce budding of the vesicles. Interacts with COPG1; the interaction involves TMED10 homodimer. Interacts with ARF1 (GDP-bound); the interaction probably involves a TMED10 oligomer. Interacts with SEC23A, SEC24B, SEC24C and SEC24D components of the coat protein complex II/COPII, indicative of an association of TMED10 with the COPII vesicle coat. Interacts with CD59. Interacts with MPPE1/PGAP5; the complex might recruit and sort GPI-anchored proteins to the ER-exit site, or the interaction might lead to recycling of PGAP5 between the ER and the Golgi. Interacts with F2LR1/PAR2. Interacts with KDELR2/ERD2; the interaction is disrupted by KDELR2 ligand. Found in a complex composed at least of SURF4, TMED2 and TMED10. Associates with the presenilin-dependent gamma-secretase complex. Interacts with STX17; the interaction is direct. Interacts with IL-1; the interaction is direct. Interacts with RAB21 (active GTP-bound form); the interaction is indirect and regulates TMED10 abundance and localization at the Golgi.

Its subcellular location is the endoplasmic reticulum membrane. The protein resides in the endoplasmic reticulum-Golgi intermediate compartment membrane. It localises to the golgi apparatus membrane. The protein localises to the golgi apparatus. It is found in the cis-Golgi network membrane. Its subcellular location is the trans-Golgi network membrane. The protein resides in the cytoplasmic vesicle. It localises to the secretory vesicle membrane. The protein localises to the cell membrane. It is found in the melanosome. In terms of biological role, cargo receptor involved in protein vesicular trafficking and quality control in the endoplasmic reticulum (ER) and Golgi. The p24 protein family is a group of transmembrane proteins that bind coat protein complex I/COPI and coat protein complex II/COPII involved in vesicular trafficking between the membranes. Acts at the lumenal side for incorporation of secretory cargo molecules into transport vesicles and involved in vesicle coat formation at the cytoplasmic side. Mainly functions in the early secretory pathway and cycles between the ER, ER-Golgi intermediate compartment (ERGIC) and Golgi, mediating cargo transport through COPI and COPII-coated vesicles. In COPII vesicle-mediated anterograde transport, involved in the transport of GPI-anchored proteins by acting together with TMED2 as their cargo receptor; the function specifically implies SEC24C and SEC24D of the COPII vesicle coat and lipid raft-like microdomains of the ER. Recognizes GPI anchors structural remodeled in the ER by the GPI inositol-deacylase/PGAP1 and the metallophosphoesterase MPPE1/PGAP5. In COPI vesicle-mediated retrograde transport, involved in the biogenesis of COPI vesicles and vesicle coat recruitment. Involved in trafficking of amyloid beta A4 protein and soluble APP-beta release (independent from the modulation of gamma-secretase activity). Involved in the KDELR2-mediated retrograde transport of the toxin A subunit (CTX-A-K63)together with COPI and the COOH terminus of KDELR2. On Golgi membranes, acts as a primary receptor for ARF1-GDP, a GTP-binding protein involved in COPI-vesicle formation. Increases coatomer-dependent GTPase-activating activity of ARFGAP2 which mediates the hydrolysis of ARF1-bound GTP and therefore modulates protein trafficking from the Golgi apparatus. Involved in the exocytic trafficking of G protein-coupled receptors F2LR1/PAR2 (trypsin and tryspin-like enzyme receptor), OPRM1 (opioid receptor) and P2RY4 (UTD and UDP receptor) from the Golgi to the plasma membrane, thus contributing to receptor resensitization. In addition to its cargo receptor activity, may also act as a protein channel after oligomerization, facilitating the post-translational entry of leaderless cytoplasmic cargo into the ERGIC. Involved in the translocation into ERGIC, the vesicle entry and the secretion of leaderless cargos (lacking the secretion signal sequence), including the mature form of interleukin 1/IL-1 family members, the alpha-crystallin B chain HSPB5, the carbohydrate-binding proteins galectin-1/LGALS1 and galectin-3/LGALS3, the microtubule-associated protein Tau/MAPT, and the annexin A1/ANXA1; the translocation process is dependent on cargo protein unfolding and enhanced by chaperones HSP90AB1 and HSP90B1/GRP9. Could also associates with the presenilin-dependent gamma-secretase complex in order to regulate gamma-cleavages of the amyloid beta A4 protein to yield amyloid-beta 40/Abeta40. This Oryctolagus cuniculus (Rabbit) protein is Transmembrane emp24 domain-containing protein 10 (TMED10).